Consider the following 240-residue polypeptide: MFGTFLQNQSVRLNMVCAPWLLAVVVVCVCNPGVEGQCWDSSHCKDLPSEDKILECIHLFRSGLQDESPEPRSAAQQSTEESLSLGILLAALTSGERALDADPEPHSDKRHSYSMEHFRWGKPIGHKRRPIKVYASSLEGGDSSEGTFPLQARRQLSSWEDEMVGALGNQGAKAQTKVVPRTLTVTGLQDKKDGSYRMGHFRWGSPTAIKRYGGFMKPYTQQSHKPLITLLKHVTLKNEQ.

Positions 1-36 (MFGTFLQNQSVRLNMVCAPWLLAVVVVCVCNPGVEG) are cleaved as a signal peptide. Q37 carries the pyrrolidone carboxylic acid modification. A propeptide is located at residue H111. S112 bears the N-acetylserine; in Corticotropin mark. I124 bears the Isoleucine amide mark.

Belongs to the POMC family. Specific enzymatic cleavages at paired basic residues yield the different active peptides. Post-translationally, acetylation of beta-endorphin occurs in a tissue-specific manner. In terms of tissue distribution, pituitary and hypothalamus of adult diploid animals.

The protein localises to the secreted. Functionally, stimulates the adrenal glands to release cortisol. Melanocyte-stimulating hormone alpha: Anorexigenic peptide. Increases the pigmentation of skin by increasing melanin production in melanocytes. In terms of biological role, melanocyte-stimulating hormone beta: Increases the pigmentation of skin by increasing melanin production in melanocytes. Its function is as follows. Beta-endorphin: Endogenous orexigenic opiate. Functionally, endogenous opiate. The protein is Pro-opiomelanocortin B (pomcb) of Oncorhynchus mykiss (Rainbow trout).